Consider the following 375-residue polypeptide: Queuine tRNA-ribosyltransferase (375 aa).

Catalysis depends on D89, which acts as the Proton acceptor. Substrate is bound by residues 89–93, D143, Q187, and G214; that span reads DSGGF. Residues 245-251 form an RNA binding region; sequence GVGKPED. Residue D264 is the Nucleophile of the active site. An RNA binding; important for wobble base 34 recognition region spans residues 269–273; that stretch reads TRNAR. C302, C304, C307, and H333 together coordinate Zn(2+).

It belongs to the queuine tRNA-ribosyltransferase family. In terms of assembly, homodimer. Within each dimer, one monomer is responsible for RNA recognition and catalysis, while the other monomer binds to the replacement base PreQ1. It depends on Zn(2+) as a cofactor.

The enzyme catalyses 7-aminomethyl-7-carbaguanine + guanosine(34) in tRNA = 7-aminomethyl-7-carbaguanosine(34) in tRNA + guanine. It participates in tRNA modification; tRNA-queuosine biosynthesis. Catalyzes the base-exchange of a guanine (G) residue with the queuine precursor 7-aminomethyl-7-deazaguanine (PreQ1) at position 34 (anticodon wobble position) in tRNAs with GU(N) anticodons (tRNA-Asp, -Asn, -His and -Tyr). Catalysis occurs through a double-displacement mechanism. The nucleophile active site attacks the C1' of nucleotide 34 to detach the guanine base from the RNA, forming a covalent enzyme-RNA intermediate. The proton acceptor active site deprotonates the incoming PreQ1, allowing a nucleophilic attack on the C1' of the ribose to form the product. After dissociation, two additional enzymatic reactions on the tRNA convert PreQ1 to queuine (Q), resulting in the hypermodified nucleoside queuosine (7-(((4,5-cis-dihydroxy-2-cyclopenten-1-yl)amino)methyl)-7-deazaguanosine). This chain is Queuine tRNA-ribosyltransferase, found in Salmonella typhi.